A 429-amino-acid chain; its full sequence is Enolase (429 aa).

Glutamine 162 contributes to the (2R)-2-phosphoglycerate binding site. Glutamate 204 serves as the catalytic Proton donor. Residues aspartate 241, glutamate 283, and aspartate 310 each coordinate Mg(2+). Residues lysine 335, arginine 364, serine 365, and lysine 386 each coordinate (2R)-2-phosphoglycerate. Catalysis depends on lysine 335, which acts as the Proton acceptor.

This sequence belongs to the enolase family. Requires Mg(2+) as cofactor.

It is found in the cytoplasm. It localises to the secreted. The protein localises to the cell surface. It catalyses the reaction (2R)-2-phosphoglycerate = phosphoenolpyruvate + H2O. It functions in the pathway carbohydrate degradation; glycolysis; pyruvate from D-glyceraldehyde 3-phosphate: step 4/5. Catalyzes the reversible conversion of 2-phosphoglycerate (2-PG) into phosphoenolpyruvate (PEP). It is essential for the degradation of carbohydrates via glycolysis. This is Enolase from Mycobacterium tuberculosis (strain ATCC 25177 / H37Ra).